The primary structure comprises 178 residues: Large ribosomal subunit protein uL6 (178 aa).

This sequence belongs to the universal ribosomal protein uL6 family. As to quaternary structure, part of the 50S ribosomal subunit.

In terms of biological role, this protein binds to the 23S rRNA, and is important in its secondary structure. It is located near the subunit interface in the base of the L7/L12 stalk, and near the tRNA binding site of the peptidyltransferase center. This Gluconobacter oxydans (strain 621H) (Gluconobacter suboxydans) protein is Large ribosomal subunit protein uL6.